A 658-amino-acid polypeptide reads, in one-letter code: Transport protein particle subunit trs85-1 (658 aa).

Belongs to the TRS85 family. Part of the multisubunit TRAPP (transport protein particle) complexes I and II.

The protein resides in the golgi apparatus. It localises to the cis-Golgi network. In terms of biological role, component of the TRAPP I and TRAPP II complexes. TRAPP I plays a key role in the late stages of endoplasmic reticulum to Golgi traffic. TRAPP II seems to play a role in intra-Golgi transport. Has a role late in meiosis following DNA replication. The protein is Transport protein particle subunit trs85-1 (trs85-1) of Schizosaccharomyces pombe (strain 972 / ATCC 24843) (Fission yeast).